Here is a 973-residue protein sequence, read N- to C-terminus: Ras-related protein Rab-44 (973 aa).

Residues methionine 1–glutamine 21 show a composition bias toward basic residues. Positions methionine 1 to serine 42 are disordered. One can recognise an EF-hand domain in the interval glycine 77–serine 111. The tract at residues serine 112 to glutamate 140 is disordered. Residues serine 123–leucine 135 show a composition bias toward polar residues. A coiled-coil region spans residues leucine 219–glutamate 310. 4 disordered regions span residues arginine 319 to asparagine 368, phenylalanine 421 to leucine 481, glycine 493 to valine 708, and glutamate 724 to glutamine 779. Over residues aspartate 428–proline 440 the composition is skewed to pro residues. Residues lysine 445 to aspartate 457 show a composition bias toward basic and acidic residues. A compositionally biased stretch (low complexity) spans glycine 513–serine 524. Composition is skewed to basic and acidic residues over residues serine 548–lysine 559, histidine 598–glycine 608, and serine 654–serine 663. Residues glutamate 665–proline 680 show a composition bias toward polar residues. Positions alanine 750–arginine 766 are enriched in basic and acidic residues. GTP contacts are provided by residues glycine 792–threonine 799, aspartate 840–glutamine 844, and asparagine 898–aspartate 901. S-geranylgeranyl cysteine attachment occurs at residues cysteine 971 and cysteine 972.

Belongs to the small GTPase superfamily. Rab family.

The protein localises to the cell membrane. This is Ras-related protein Rab-44 (Rab44) from Mus musculus (Mouse).